Reading from the N-terminus, the 172-residue chain is Large ribosomal subunit protein uL16 (172 aa).

The protein belongs to the universal ribosomal protein uL16 family.

In Methanocella arvoryzae (strain DSM 22066 / NBRC 105507 / MRE50), this protein is Large ribosomal subunit protein uL16.